The chain runs to 200 residues: MSKVLYIKANAKPEGVSRTFKISDSFIEEYRNQKPNDEIITLDLYKEGISFLTEEAIKLHVPKQGEGKDHHVLKYAYQFAEADKYVIAAPFWNLSFPAILKAYIDYICVTGITFKYTEEGAVGLCQGKKAVHIVSRGGGYSEGPFEMYEMGDRYLRTIFGFLGITDFTTIVAEKLDVVGEDVEGILRNTIEKAKEQAKEF.

135–138 (SRGG) lines the FMN pocket.

It belongs to the azoreductase type 1 family. In terms of assembly, homodimer. Requires FMN as cofactor.

It catalyses the reaction 2 a quinone + NADH + H(+) = 2 a 1,4-benzosemiquinone + NAD(+). It carries out the reaction N,N-dimethyl-1,4-phenylenediamine + anthranilate + 2 NAD(+) = 2-(4-dimethylaminophenyl)diazenylbenzoate + 2 NADH + 2 H(+). Its function is as follows. Quinone reductase that provides resistance to thiol-specific stress caused by electrophilic quinones. In terms of biological role, also exhibits azoreductase activity. Catalyzes the reductive cleavage of the azo bond in aromatic azo compounds to the corresponding amines. This chain is FMN-dependent NADH:quinone oxidoreductase 2, found in Clostridium acetobutylicum (strain ATCC 824 / DSM 792 / JCM 1419 / IAM 19013 / LMG 5710 / NBRC 13948 / NRRL B-527 / VKM B-1787 / 2291 / W).